Here is a 396-residue protein sequence, read N- to C-terminus: Calsequestrin-1 (396 aa).

A signal peptide spans Met1–Gly34. Tyr43 is subject to Phosphotyrosine. A Phosphoserine modification is found at Ser81. Thr124 bears the Phosphothreonine mark. A Phosphoserine modification is found at Ser216. A glycan (N-linked (GlcNAc...) asparagine) is linked at Asn350.

It belongs to the calsequestrin family. Monomer; increases in response to a depletion of intracellular calcium. Homodimer. Homotetramer and homopolymer. Can form linear homooligomers. Ca(2+) ions promote oligomerization. Interacts (via C-terminal end and preferentially with the monomeric form) with STIM1; this interaction increases in response to a depletion of intracellular calcium, decreases both STIM1 aggregation and clustering, interaction of STIM1 with ORAI1 and store-operated Ca(2+) entry (SOCE) activity. Interacts with ASPH and TRDN. In terms of processing, N-glycosylated. In terms of tissue distribution, expressed in myoblasts (at protein level).

The protein localises to the endoplasmic reticulum. It localises to the sarcoplasmic reticulum. Its subcellular location is the sarcoplasmic reticulum lumen. The protein resides in the sarcoplasmic reticulum membrane. It is found in the mitochondrion matrix. Calsequestrin is a high-capacity, moderate affinity, calcium-binding protein and thus acts as an internal calcium store in muscle. Calcium ions are bound by clusters of acidic residues at the protein surface, often at the interface between subunits. Can bind around 80 Ca(2+) ions. Regulates the release of lumenal Ca(2+) via the calcium release channel RYR1; this plays an important role in triggering muscle contraction. Negatively regulates store-operated Ca(2+) entry (SOCE) activity. The polypeptide is Calsequestrin-1 (CASQ1) (Homo sapiens (Human)).